Consider the following 238-residue polypeptide: MLCCMRRTKQVEKNDDDQKIEQDGIKPEDKAHKAATKIQASFRGHITRKKLKGEKKDDVQAAEAEANKKDEAPVADGVEKKGEGTTTAEAAPATGSKPDEPGKAGETPSEEKKGEGDAATEQAAPQAPASSEEKAGSAETESATKASTDNSPSSKAEDAPAKEEPKQADVPAAVTAAAATTPAAEDAAAKATAQPPTETGESSQAEENIEAVDETKPKESARQDEGKEEEPEADQEHA.

The interval 1 to 238 (MLCCMRRTKQ…EEPEADQEHA (238 aa)) is disordered. S-palmitoyl cysteine attachment occurs at residues Cys3 and Cys4. Residues 9–32 (KQVEKNDDDQKIEQDGIKPEDKAH) show a composition bias toward basic and acidic residues. Residues 31 to 60 (AHKAATKIQASFRGHITRKKLKGEKKDDVQ) enclose the IQ domain. Ser41 is modified (phosphoserine; by PHK and PKC). The span at 54–83 (EKKDDVQAAEAEANKKDEAPVADGVEKKGE) shows a compositional bias: basic and acidic residues. The span at 84 to 95 (GTTTAEAAPATG) shows a compositional bias: low complexity. The span at 97–116 (KPDEPGKAGETPSEEKKGEG) shows a compositional bias: basic and acidic residues. Residues 119-130 (ATEQAAPQAPAS) are compositionally biased toward low complexity. The span at 139 to 154 (ETESATKASTDNSPSS) shows a compositional bias: polar residues. Ser151, Ser153, and Ser154 each carry phosphoserine. Residues 155–167 (KAEDAPAKEEPKQ) are compositionally biased toward basic and acidic residues. Over residues 168 to 199 (ADVPAAVTAAAATTPAAEDAAAKATAQPPTET) the composition is skewed to low complexity. Thr181 carries the phosphothreonine modification. Ser202 and Ser203 each carry phosphoserine; by CK2. The span at 213–225 (DETKPKESARQDE) shows a compositional bias: basic and acidic residues. The segment covering 226–238 (GKEEEPEADQEHA) has biased composition (acidic residues).

It belongs to the neuromodulin family. Identified in a complex containing FGFR4, NCAM1, CDH2, PLCG1, FRS2, SRC, SHC1, GAP43 and CTTN. Interacts (via IQ domain) with calmodulin. Binds calmodulin with a greater affinity in the absence of Ca(2+) than in its presence. Phosphorylated. Phosphorylation of this protein by a protein kinase C is specifically correlated with certain forms of synaptic plasticity. In terms of processing, palmitoylated by ZDHHC3. Palmitoylation is regulated by ARF6 and is essential for plasma membrane association and axonal and dendritic filopodia induction. Deacylated by LYPLA2.

It is found in the cell membrane. The protein localises to the cell projection. It localises to the growth cone membrane. Its subcellular location is the synapse. The protein resides in the filopodium membrane. It is found in the perikaryon. The protein localises to the dendrite. It localises to the axon. Its subcellular location is the cytoplasm. This protein is associated with nerve growth. It is a major component of the motile 'growth cones' that form the tips of elongating axons. Plays a role in axonal and dendritic filopodia induction. This is Neuromodulin (GAP43) from Homo sapiens (Human).